The chain runs to 505 residues: Trans-cinnamate 4-monooxygenase (505 aa).

The chain crosses the membrane as a helical span at residues 3–23 (LLLLEKTLLGLFIAAITAIAI). Residues 213-218 (RSRLAQ) and Ala306 each bind (E)-cinnamate. Cys447 lines the heme pocket.

This sequence belongs to the cytochrome P450 family. Requires heme as cofactor.

It localises to the membrane. The catalysed reaction is (E)-cinnamate + reduced [NADPH--hemoprotein reductase] + O2 = (E)-4-coumarate + oxidized [NADPH--hemoprotein reductase] + H2O + H(+). It participates in phenylpropanoid metabolism; trans-4-coumarate biosynthesis; trans-4-coumarate from trans-cinnamate: step 1/1. Its function is as follows. Catalyzes the first oxidative step of the phenylpropanoid pathway in higher plants by transforming trans-cinnamate into p-coumarate. The compounds formed by this pathway are essential components for lignification, pollination, and defense against ultraviolet light, predators and pathogens. The protein is Trans-cinnamate 4-monooxygenase (CYP73A14) of Glycyrrhiza echinata (Licorice).